The chain runs to 140 residues: Pro-vaccinia growth factor (140 aa).

An N-terminal signal peptide occupies residues 1 to 18; the sequence is MLINYLMLLFAAMIIRSF. The Extracellular portion of the chain corresponds to 19-100; the sequence is ADSGNAIETT…SEKPNTTTSY (82 aa). Asparagine 34 is a glycosylation site (N-linked (GlcNAc...) asparagine; by host). Residues 41–81 enclose the EGF-like domain; the sequence is AIRLCGPEGDGYCLHGDCIHARDIDGMYCRCSHGYTGIRCQ. Cystine bridges form between cysteine 45–cysteine 58, cysteine 53–cysteine 69, and cysteine 71–cysteine 80. Residue asparagine 95 is glycosylated (N-linked (GlcNAc...) asparagine; by host). A helical transmembrane segment spans residues 101-121; that stretch reads IPSPGIMLVLVGIIIITCCLL. Residues 122–140 lie on the Cytoplasmic side of the membrane; it reads SVYRFTRRTKLPIQDMVVP.

It belongs to the orthopoxvirus OPG019 family. In terms of assembly, interacts with host EGFR.

It localises to the host membrane. It is found in the secreted. Its function is as follows. Stimulates cellular proliferation (hyperplasia)and mobility around infected cells to promote rapid and efficient spread of infection. This effect is beneficial for virus replication in vivo, because poxviruses replicate possibly better in proliferating cells than in quiescent cells. Acts by binding host EGFR, inducing its dimerization, autophosphorylation and leading to activation of several cellular pathways regulating cell proliferation or cell survival. The activation by host EGFR of mitogen activated protein kinases (MAPK) and extracellular-signal regulated kinases (ERK) are essential for the positive effect of vaccinia growth factor on poxvirus virulence in vivo. The chain is Pro-vaccinia growth factor (OPG019) from Homo sapiens (Human).